Here is a 145-residue protein sequence, read N- to C-terminus: Large ribosomal subunit protein uL11 (145 aa).

The protein belongs to the universal ribosomal protein uL11 family. In terms of assembly, part of the ribosomal stalk of the 50S ribosomal subunit. Interacts with L10 and the large rRNA to form the base of the stalk. L10 forms an elongated spine to which L12 dimers bind in a sequential fashion forming a multimeric L10(L12)X complex. One or more lysine residues are methylated.

Its function is as follows. Forms part of the ribosomal stalk which helps the ribosome interact with GTP-bound translation factors. In Rickettsia akari (strain Hartford), this protein is Large ribosomal subunit protein uL11.